We begin with the raw amino-acid sequence, 354 residues long: Methionine import ATP-binding protein MetN (354 aa).

Residues 8–250 (LDHIDITFHQ…PREDLTKDFI (243 aa)) enclose the ABC transporter domain. Position 42 to 49 (42 to 49 (GYSGAGKS)) interacts with ATP.

The protein belongs to the ABC transporter superfamily. Methionine importer (TC 3.A.1.24) family. In terms of assembly, the complex is composed of two ATP-binding proteins (MetN), two transmembrane proteins (MetI) and a solute-binding protein (MetQ).

Its subcellular location is the cell membrane. The enzyme catalyses L-methionine(out) + ATP + H2O = L-methionine(in) + ADP + phosphate + H(+). It catalyses the reaction D-methionine(out) + ATP + H2O = D-methionine(in) + ADP + phosphate + H(+). Functionally, part of the ABC transporter complex MetNIQ involved in methionine import. Responsible for energy coupling to the transport system. The polypeptide is Methionine import ATP-binding protein MetN (Streptococcus mutans serotype c (strain ATCC 700610 / UA159)).